The sequence spans 342 residues: L-threonine 3-dehydrogenase (342 aa).

Cys-38 is a binding site for Zn(2+). Residues Thr-40 and His-43 each act as charge relay system in the active site. Residues His-63, Glu-64, Cys-93, Cys-96, Cys-99, and Cys-107 each contribute to the Zn(2+) site. NAD(+) is bound by residues Ile-175, Asp-195, Arg-200, 262-264 (LGI), and 286-287 (IY).

It belongs to the zinc-containing alcohol dehydrogenase family. In terms of assembly, homotetramer. The cofactor is Zn(2+).

It is found in the cytoplasm. The catalysed reaction is L-threonine + NAD(+) = (2S)-2-amino-3-oxobutanoate + NADH + H(+). It functions in the pathway amino-acid degradation; L-threonine degradation via oxydo-reductase pathway; glycine from L-threonine: step 1/2. In terms of biological role, catalyzes the NAD(+)-dependent oxidation of L-threonine to 2-amino-3-ketobutyrate. The protein is L-threonine 3-dehydrogenase of Burkholderia ambifaria (strain ATCC BAA-244 / DSM 16087 / CCUG 44356 / LMG 19182 / AMMD) (Burkholderia cepacia (strain AMMD)).